The following is a 120-amino-acid chain: NAD(P)H-quinone oxidoreductase subunit 3 (120 aa).

Transmembrane regions (helical) follow at residues 6 to 26 (GYDA…LALV), 64 to 84 (MFAL…PWAV), and 89 to 109 (LGLL…VALA).

Belongs to the complex I subunit 3 family. As to quaternary structure, NDH-1 can be composed of about 15 different subunits; different subcomplexes with different compositions have been identified which probably have different functions.

It is found in the cellular thylakoid membrane. The catalysed reaction is a plastoquinone + NADH + (n+1) H(+)(in) = a plastoquinol + NAD(+) + n H(+)(out). It carries out the reaction a plastoquinone + NADPH + (n+1) H(+)(in) = a plastoquinol + NADP(+) + n H(+)(out). In terms of biological role, NDH-1 shuttles electrons from an unknown electron donor, via FMN and iron-sulfur (Fe-S) centers, to quinones in the respiratory and/or the photosynthetic chain. The immediate electron acceptor for the enzyme in this species is believed to be plastoquinone. Couples the redox reaction to proton translocation, and thus conserves the redox energy in a proton gradient. Cyanobacterial NDH-1 also plays a role in inorganic carbon-concentration. This Prochlorococcus marinus (strain MIT 9313) protein is NAD(P)H-quinone oxidoreductase subunit 3.